The primary structure comprises 582 residues: uncharacterized protein (582 aa).

6 consecutive transmembrane segments (helical) span residues 17 to 37 (VAML…LPTV), 57 to 77 (LGAV…GAVY), 131 to 151 (MTAT…IMAI), 156 to 176 (ALTW…YWII), 239 to 259 (ALML…LIWF), and 271 to 291 (VGSL…VLMA). The ABC transmembrane type-1 domain maps to 17–300 (VAMLMMLQLV…ATMTLAVLPR (284 aa)). One can recognise an ABC transporter domain in the interval 335–571 (VRLAGATFTY…CPTYAEFAAS (237 aa)). An ATP-binding site is contributed by 369–376 (GSTGSGKS).

Belongs to the ABC transporter superfamily. MsbA family.

Its subcellular location is the cell membrane. This is an uncharacterized protein from Mycobacterium bovis (strain ATCC BAA-935 / AF2122/97).